The primary structure comprises 431 residues: 5-methylthioadenosine/S-adenosylhomocysteine deaminase (431 aa).

H66 and H68 together coordinate Zn(2+). Positions 95, 147, and 185 each coordinate substrate. H212 is a binding site for Zn(2+). 2 residues coordinate substrate: E215 and D300. D300 contacts Zn(2+).

This sequence belongs to the metallo-dependent hydrolases superfamily. MTA/SAH deaminase family. The cofactor is Zn(2+).

The enzyme catalyses S-adenosyl-L-homocysteine + H2O + H(+) = S-inosyl-L-homocysteine + NH4(+). The catalysed reaction is S-methyl-5'-thioadenosine + H2O + H(+) = S-methyl-5'-thioinosine + NH4(+). Catalyzes the deamination of 5-methylthioadenosine and S-adenosyl-L-homocysteine into 5-methylthioinosine and S-inosyl-L-homocysteine, respectively. Is also able to deaminate adenosine. This Desulfitobacterium hafniense (strain DSM 10664 / DCB-2) protein is 5-methylthioadenosine/S-adenosylhomocysteine deaminase.